The primary structure comprises 160 residues: tRNA (cytidine(56)-2'-O)-methyltransferase (160 aa).

Residues Leu68, Gly94–Val98, and Ile112–Glu119 each bind S-adenosyl-L-methionine.

It belongs to the aTrm56 family. Homodimer.

The protein localises to the cytoplasm. The catalysed reaction is cytidine(56) in tRNA + S-adenosyl-L-methionine = 2'-O-methylcytidine(56) in tRNA + S-adenosyl-L-homocysteine + H(+). Specifically catalyzes the AdoMet-dependent 2'-O-ribose methylation of cytidine at position 56 in tRNAs. The protein is tRNA (cytidine(56)-2'-O)-methyltransferase of Saccharolobus solfataricus (strain ATCC 35092 / DSM 1617 / JCM 11322 / P2) (Sulfolobus solfataricus).